The chain runs to 402 residues: Beta-ketoacyl-[acyl-carrier-protein] synthase III B, chloroplastic (402 aa).

Active-site residues include Cys178, His328, and Asn358.

This sequence belongs to the thiolase-like superfamily. FabH family.

The protein localises to the plastid. The protein resides in the chloroplast. The catalysed reaction is malonyl-[ACP] + acetyl-CoA + H(+) = 3-oxobutanoyl-[ACP] + CO2 + CoA. It participates in lipid metabolism; fatty acid biosynthesis. Its function is as follows. Catalyzes the condensation reaction of fatty acid synthesis by the addition to an acyl acceptor of two carbons from malonyl-ACP. KAS III catalyzes the first condensation reaction which initiates fatty acid synthesis and may therefore play a role in governing the total rate of fatty acid production. Possesses both acetoacetyl-ACP synthase and acetyl transacylase activities. This Cuphea wrightii (Wright's waxweed) protein is Beta-ketoacyl-[acyl-carrier-protein] synthase III B, chloroplastic (KAS3B).